The chain runs to 250 residues: Myelin basic protein (250 aa).

Residues 1–28 show a composition bias toward basic and acidic residues; that stretch reads MGNHSGKRELSAEKASKDGEIHRGEAGK. Positions 1–150 are disordered; sequence MGNHSGKREL…SQRSKYLATA (150 aa). An N-acetylalanine modification is found at Gly2. A phosphoserine mark is found at Ser31 and Ser40. The segment covering 95 to 113 has biased composition (basic and acidic residues); the sequence is FSRDAPGREDNTFKDRPSE. At Ser96 the chain carries Phosphothreonine. Phosphoserine is present on Glu113. Glu122 carries the phosphothreonine modification. A Phosphotyrosine modification is found at Thr125. Phosphoserine is present on residues Ala135, Arg139, Ser141, and Ser144. Phosphotyrosine is present on residues Tyr146 and Leu147. Phosphothreonine is present on Thr149. Ser151 carries the post-translational modification Phosphoserine. Ser151 is modified (phosphotyrosine). Residue Thr152 is modified to Phosphothreonine. Arg157 and Arg163 each carry citrulline. At Thr167 the chain carries Phosphothreonine. Ser172 is modified (phosphoserine). Omega-N-methylarginine occurs at positions 175 and 181. The tract at residues 175 to 250 is disordered; sequence RFFSGDRGAP…SRSGSPMARR (76 aa). At Ser188 the chain carries Phosphoserine. Thr197 carries the post-translational modification Phosphothreonine. Positions 197 to 206 are enriched in polar residues; it reads THYGSLPQKS. The residue at position 199 (Tyr199) is a Phosphotyrosine. Phosphoserine is present on Ser206. Thr211, Thr226, and Thr229 each carry phosphothreonine. Gln234 carries the deamidated glutamine modification. Arg239 bears the Citrulline mark. Ser241 is subject to Phosphoserine. At Ser245 the chain carries Phosphoserine; by UHMK1. At Arg250 the chain carries Citrulline.

This sequence belongs to the myelin basic protein family. As to quaternary structure, homodimer. Post-translationally, as in other animals, several charge isomers may be produced as a result of optional post-translational modifications, such as phosphorylation of serine or threonine residues, deamidation of glutamine or asparagine residues, citrullination and methylation of arginine residues. Methylated on arginine residues; decreases with the age of the animal, making MBP more cationic. In terms of processing, phosphorylated by TAOK2, VRK2, MAPK11, MAPK12, MAPK14 and MINK1. Post-translationally, proteolytically cleaved in B cell lysosomes by cathepsin CTSG which degrades the major immunogenic MBP epitope and prevents the activation of MBP-specific autoreactive T cells. As to expression, in the embryo, isoform 1-isoform 3 are found in neurons within the central nervous system (primarily in pioneer neurons important in the formation of the cortex) and the peripheral nervous system. They are also expressed in the thymus, gut, lung and kidney. In the adult, isoform 1-isoform 3 are highly expressed in the brain (mainly in brain regions rich in oligodendrocytes) and spleen. Lower levels are seen in the heart, kidney and lung. Isoform 2 is also found in cells of the immune system. The isoforms missing the 134 first amino acids (isoform 4-isoform 13) are almost exclusively produced in the myelin-forming cells, the mature oligodendrocytes.

The protein resides in the myelin membrane. It localises to the cytoplasm. Its subcellular location is the nucleus. Its function is as follows. The classic group of MBP isoforms (isoform 4-isoform 13) are with PLP the most abundant protein components of the myelin membrane in the CNS. They have a role in both its formation and stabilization. The non-classic group of MBP isoforms (isoform 1-isoform 3/Golli-MBPs) may preferentially have a role in the early developing brain long before myelination, maybe as components of transcriptional complexes, and may also be involved in signaling pathways in T-cells and neural cells. Differential splicing events combined to optional post-translational modifications give a wide spectrum of isomers, with each of them potentially having a specialized function. The sequence is that of Myelin basic protein (Mbp) from Mus musculus (Mouse).